Here is a 544-residue protein sequence, read N- to C-terminus: Phenylalanine--tRNA ligase beta subunit (544 aa).

Residues 270–346 (LEPKTRFLTK…KGYGYENIKV (77 aa)) form the B5 domain. 4 residues coordinate Mg(2+): Asp324, Asp330, Glu333, and Asp334.

Belongs to the phenylalanyl-tRNA synthetase beta subunit family. Type 2 subfamily. As to quaternary structure, tetramer of two alpha and two beta subunits. Mg(2+) is required as a cofactor.

It localises to the cytoplasm. It carries out the reaction tRNA(Phe) + L-phenylalanine + ATP = L-phenylalanyl-tRNA(Phe) + AMP + diphosphate + H(+). In Methanosarcina barkeri (strain Fusaro / DSM 804), this protein is Phenylalanine--tRNA ligase beta subunit.